We begin with the raw amino-acid sequence, 321 residues long: L-carnitine dehydrogenase (321 aa).

Residue 7-12 (GTGVIG) coordinates NAD(+).

It belongs to the 3-hydroxyacyl-CoA dehydrogenase family. L-carnitine dehydrogenase subfamily. In terms of assembly, homodimer.

It localises to the cytoplasm. It catalyses the reaction carnitine + NAD(+) = 3-dehydrocarnitine + NADH + H(+). It functions in the pathway amine and polyamine metabolism; carnitine metabolism. Its function is as follows. Catalyzes the NAD(+)-dependent oxidation of L-carnitine to 3-dehydrocarnitine. This Staphylococcus epidermidis (strain ATCC 12228 / FDA PCI 1200) protein is L-carnitine dehydrogenase.